The primary structure comprises 25 residues: Ribosome-inactivating protein velutin (25 aa).

Residues 1-25 (XHPDLFXXRPDNTASPKFEDPRLNP) form a disordered region.

This sequence belongs to the ribosome-inactivating protein family.

The catalysed reaction is Endohydrolysis of the N-glycosidic bond at one specific adenosine on the 28S rRNA.. Functionally, inhibits protein synthesis but does not possess ribonuclease activity. Also inhibits HIV-1 reverse transcriptase, beta-glucosidase and beta-glucuronidase. This is Ribosome-inactivating protein velutin from Flammulina velutipes (Agaricus velutipes).